The following is a 434-amino-acid chain: Protein maelstrom homolog (434 aa).

Residues 4–73 (RRASRNAYYF…AQGKDSGPSE (70 aa)) constitute a DNA-binding region (HMG box).

It belongs to the maelstrom family. In terms of assembly, interacts with SMARCB1, SIN3B and DDX4. Interacts with piRNA-associated proteins TDRD1, PIWIL1 and PIWIL2. Interacts with Tex19.1 and, probably, Tex19.2. Testis-specific. Present in spermatocytes and round and early elongating spermatids.

It is found in the cytoplasm. The protein localises to the nucleus. Its function is as follows. Plays a central role during spermatogenesis by repressing transposable elements and preventing their mobilization, which is essential for the germline integrity. Acts via the piRNA metabolic process, which mediates the repression of transposable elements during meiosis by forming complexes composed of piRNAs and Piwi proteins and governs the methylation and subsequent repression of transposons. Its association with piP-bodies suggests a participation in the secondary piRNAs metabolic process. Required for the localization of germ-cell factors to the meiotic nuage. In Mus musculus (Mouse), this protein is Protein maelstrom homolog.